The primary structure comprises 172 residues: Major exported protein (172 aa).

This sequence belongs to the hcp1 family.

Its subcellular location is the secreted. The polypeptide is Major exported protein (hcpA) (Pseudomonas aeruginosa (strain ATCC 15692 / DSM 22644 / CIP 104116 / JCM 14847 / LMG 12228 / 1C / PRS 101 / PAO1)).